The following is a 243-amino-acid chain: Small ribosomal subunit protein uS5 (243 aa).

Over residues 1–10 (MSDNETKETQ) the composition is skewed to basic and acidic residues. Residues 1–50 (MSDNETKETQVAEETQNTVATESNNEDRKGRRGQRGEGRRGERRNRREEN) form a disordered region. Residues 12-23 (AEETQNTVATES) are compositionally biased toward polar residues. The span at 25–50 (NEDRKGRRGQRGEGRRGERRNRREEN) shows a compositional bias: basic and acidic residues. The 64-residue stretch at 55-118 (LLDRVVTINR…LDAKKHMFSV (64 aa)) folds into the S5 DRBM domain.

The protein belongs to the universal ribosomal protein uS5 family. As to quaternary structure, part of the 30S ribosomal subunit. Contacts proteins S4 and S8.

In terms of biological role, with S4 and S12 plays an important role in translational accuracy. Its function is as follows. Located at the back of the 30S subunit body where it stabilizes the conformation of the head with respect to the body. This chain is Small ribosomal subunit protein uS5, found in Bifidobacterium longum (strain DJO10A).